The chain runs to 455 residues: Glutamate--tRNA ligase (455 aa).

The 'HIGH' region signature appears at 8-18 (PSPTGYLHIGG). The 'KMSKS' region motif lies at 231–235 (RLSKR). Residue K234 coordinates ATP.

It belongs to the class-I aminoacyl-tRNA synthetase family. Glutamate--tRNA ligase type 1 subfamily. In terms of assembly, monomer.

Its subcellular location is the cytoplasm. It carries out the reaction tRNA(Glu) + L-glutamate + ATP = L-glutamyl-tRNA(Glu) + AMP + diphosphate. Its function is as follows. Catalyzes the attachment of glutamate to tRNA(Glu) in a two-step reaction: glutamate is first activated by ATP to form Glu-AMP and then transferred to the acceptor end of tRNA(Glu). This chain is Glutamate--tRNA ligase, found in Vesicomyosocius okutanii subsp. Calyptogena okutanii (strain HA).